The primary structure comprises 412 residues: L-cysteine:1D-myo-inositol 2-amino-2-deoxy-alpha-D-glucopyranoside ligase (412 aa).

Residue C45 coordinates Zn(2+). Residues 45-48 (CGIT), T60, and 83-85 (NIT) contribute to the L-cysteinyl-5'-AMP site. The 'HIGH' region motif lies at 47–57 (ITPYDAAHLGH). The 'ERGGDP' region motif lies at 185–190 (ERGGDP). W225 provides a ligand contact to L-cysteinyl-5'-AMP. C229 serves as a coordination point for Zn(2+). An L-cysteinyl-5'-AMP-binding site is contributed by 247-249 (GDD). H254 contributes to the Zn(2+) binding site. V281 contributes to the L-cysteinyl-5'-AMP binding site. The 'KMSKS' region motif lies at 287–291 (KMSKS).

Belongs to the class-I aminoacyl-tRNA synthetase family. MshC subfamily. Monomer. It depends on Zn(2+) as a cofactor.

It catalyses the reaction 1D-myo-inositol 2-amino-2-deoxy-alpha-D-glucopyranoside + L-cysteine + ATP = 1D-myo-inositol 2-(L-cysteinylamino)-2-deoxy-alpha-D-glucopyranoside + AMP + diphosphate + H(+). Functionally, catalyzes the ATP-dependent condensation of GlcN-Ins and L-cysteine to form L-Cys-GlcN-Ins. The protein is L-cysteine:1D-myo-inositol 2-amino-2-deoxy-alpha-D-glucopyranoside ligase of Thermobifida fusca (strain YX).